The following is a 113-amino-acid chain: uncharacterized protein (113 aa).

Residues 28–55 (CDGGPRRPLSRRGEEARRARAPSYEEQE) are disordered.

This is an uncharacterized protein from Human cytomegalovirus (strain AD169) (HHV-5).